We begin with the raw amino-acid sequence, 733 residues long: Polyribonucleotide nucleotidyltransferase (733 aa).

The Mg(2+) site is built by Asp503 and Asp509. The 60-residue stretch at 570–629 folds into the KH domain; that stretch reads PRLTTIQIPVDAIGMVIGKGGETIRSITEETGAEINIDDDGTVTIACSSPEATKAAVETI. Residues 639 to 713 form the S1 motif domain; sequence GTIYMGKVRD…GKTKFALSIK (75 aa).

Belongs to the polyribonucleotide nucleotidyltransferase family. It depends on Mg(2+) as a cofactor.

It localises to the cytoplasm. The enzyme catalyses RNA(n+1) + phosphate = RNA(n) + a ribonucleoside 5'-diphosphate. Involved in mRNA degradation. Catalyzes the phosphorolysis of single-stranded polyribonucleotides processively in the 3'- to 5'-direction. This Chlorobaculum tepidum (strain ATCC 49652 / DSM 12025 / NBRC 103806 / TLS) (Chlorobium tepidum) protein is Polyribonucleotide nucleotidyltransferase.